The sequence spans 400 residues: Elongation factor Tu 2 (400 aa).

The 200-residue stretch at K10 to Q209 folds into the tr-type G domain. The G1 stretch occupies residues G19–T26. A GTP-binding site is contributed by G19–T26. T26 lines the Mg(2+) pocket. The interval G60 to N64 is G2. The segment at D81–G84 is G3. GTP-binding positions include D81–H85 and N136–D139. A G4 region spans residues N136–D139. The segment at S174–L176 is G5.

Belongs to the TRAFAC class translation factor GTPase superfamily. Classic translation factor GTPase family. EF-Tu/EF-1A subfamily. As to quaternary structure, monomer.

The protein resides in the cytoplasm. The enzyme catalyses GTP + H2O = GDP + phosphate + H(+). Functionally, GTP hydrolase that promotes the GTP-dependent binding of aminoacyl-tRNA to the A-site of ribosomes during protein biosynthesis. The sequence is that of Elongation factor Tu 2 from Pelotomaculum thermopropionicum (strain DSM 13744 / JCM 10971 / SI).